Reading from the N-terminus, the 646-residue chain is Macrolide export ATP-binding/permease protein MacB (646 aa).

Residues Ile-5–Gln-243 form the ABC transporter domain. Position 41 to 48 (Gly-41 to Ser-48) interacts with ATP. 4 consecutive transmembrane segments (helical) span residues Thr-272–Gly-292, Phe-518–Met-538, Ile-570–Ile-590, and Ala-611–Ala-631.

This sequence belongs to the ABC transporter superfamily. Macrolide exporter (TC 3.A.1.122) family. As to quaternary structure, homodimer. Part of the tripartite efflux system MacAB-TolC, which is composed of an inner membrane transporter, MacB, a periplasmic membrane fusion protein, MacA, and an outer membrane component, TolC. The complex forms a large protein conduit and can translocate molecules across both the inner and outer membranes. Interacts with MacA.

Its subcellular location is the cell inner membrane. In terms of biological role, part of the tripartite efflux system MacAB-TolC. MacB is a non-canonical ABC transporter that contains transmembrane domains (TMD), which form a pore in the inner membrane, and an ATP-binding domain (NBD), which is responsible for energy generation. Confers resistance against macrolides. This chain is Macrolide export ATP-binding/permease protein MacB, found in Escherichia coli.